A 306-amino-acid polypeptide reads, in one-letter code: Abnormal cell migration protein 21 (306 aa).

TSP type-1 domains follow at residues 55 to 102 (PGGW…AISS) and 109 to 155 (FGSW…DECP). Residues Trp-58 and Trp-61 are each glycosylated (C-linked (Man) tryptophan). 3 cysteine pairs are disulfide-bonded: Cys-121–Cys-149, Cys-123–Cys-154, and Cys-134–Cys-139. A helical membrane pass occupies residues 240-260 (CLPLHFAIPIFCFCILTGFLL).

Post-translationally, glycosylated via C-mannosylation by dpy-19 at Trp-58 and Trp-61.

Its subcellular location is the membrane. Required for determination of left/right asymmetry in nervous system. Acts together with unc-40 to control an initial left-right asymmetric polarization of the Q neuroblasts. Mig-21 and unc-40 may control the asymmetry in Wnt signaling response by restricting posterior polarization to one of the 2 Q neuroblasts. Involved in left-side QL posterior migration. In right-side QR, unc-40 and mig-21 pathways mutually inhibit each other in posterior migration, allowing anterior QR migration. This is Abnormal cell migration protein 21 (mig-21) from Caenorhabditis elegans.